The primary structure comprises 1787 residues: Chitin synthase 5 (1787 aa).

A disordered region spans residues Met-1 to Ser-26. A glycan (N-linked (GlcNAc...) asparagine) is linked at Asn-164. The interval Arg-345 to Asp-367 is disordered. 4 N-linked (GlcNAc...) asparagine glycosylation sites follow: Asn-643, Asn-657, Asn-668, and Asn-695. The next 2 helical transmembrane spans lie at Met-747–Val-767 and Phe-783–Leu-803. N-linked (GlcNAc...) asparagine glycosylation is found at Asn-894 and Asn-1018. Residues Phe-1055–Leu-1075 form a helical membrane-spanning segment. Asn-1420 carries an N-linked (GlcNAc...) asparagine glycan. 3 helical membrane-spanning segments follow: residues Phe-1445–Gly-1465, Phe-1478–Ile-1498, and Ile-1506–Tyr-1526. N-linked (GlcNAc...) asparagine glycosylation occurs at Asn-1533. A disordered region spans residues Ser-1628–Ala-1657. The region spanning Gly-1729 to Ala-1785 is the DEK-C domain.

It belongs to the chitin synthase family. Class V subfamily.

It is found in the cell membrane. The enzyme catalyses [(1-&gt;4)-N-acetyl-beta-D-glucosaminyl](n) + UDP-N-acetyl-alpha-D-glucosamine = [(1-&gt;4)-N-acetyl-beta-D-glucosaminyl](n+1) + UDP + H(+). Its function is as follows. Polymerizes chitin, a structural polymer of the cell wall and septum, by transferring the sugar moiety of UDP-GlcNAc to the non-reducing end of the growing chitin polymer. May play a minor overlapping role with CHS6 in growth and differentiation. The sequence is that of Chitin synthase 5 from Pyricularia oryzae (strain 70-15 / ATCC MYA-4617 / FGSC 8958) (Rice blast fungus).